Here is a 626-residue protein sequence, read N- to C-terminus: Mitogen-activated protein kinase kinase kinase 3 (626 aa).

The PB1 domain occupies 44 to 123 (DVRIKFEHNG…KSLRILLLSQ (80 aa)). Disordered regions lie at residues 125-184 (RNHT…YVPE) and 218-273 (SSAE…VKGG). Composition is skewed to polar residues over residues 128–137 (TSSSPHSGVS), 144–155 (PSQSAGDINTIY), 165–174 (LSVSSQNPGR), and 219–247 (SAEN…QMSR). Phosphoserine occurs at positions 147 and 166. Phosphoserine is present on residues Ser-250 and Ser-312. The span at 250-270 (SFPDNRKECSDRETQLYDKGV) shows a compositional bias: basic and acidic residues. Ser-337 is modified (phosphoserine; by SGK1). Ser-340 is subject to Phosphoserine. One can recognise a Protein kinase domain in the interval 362-622 (WRRGKLLGQG…AEELLTHHFA (261 aa)). ATP-binding positions include 368–376 (LGQGAFGRV) and Lys-391. Asp-489 (proton acceptor) is an active-site residue.

Belongs to the protein kinase superfamily. STE Ser/Thr protein kinase family. MAP kinase kinase kinase subfamily. Binds both upstream activators and downstream substrates in multimolecular complexes. Part of a complex with MAP2K3, RAC1 and CCM2. Interacts with MAP2K5 and SPAG9. Mg(2+) is required as a cofactor. Post-translationally, phosphorylation at Ser-166 and Ser-337 by SGK1 inhibits its activity.

It carries out the reaction L-seryl-[protein] + ATP = O-phospho-L-seryl-[protein] + ADP + H(+). The enzyme catalyses L-threonyl-[protein] + ATP = O-phospho-L-threonyl-[protein] + ADP + H(+). With respect to regulation, activated by phosphorylation on Thr-530. Functionally, component of a protein kinase signal transduction cascade. Mediates activation of the NF-kappa-B, AP1 and DDIT3 transcriptional regulators. The sequence is that of Mitogen-activated protein kinase kinase kinase 3 (Map3k3) from Mus musculus (Mouse).